Here is a 94-residue protein sequence, read N- to C-terminus: Large ribosomal subunit protein bL27 (94 aa).

A propeptide spanning residues 1-9 is cleaved from the precursor; that stretch reads MLKLNLQFF.

Belongs to the bacterial ribosomal protein bL27 family. In terms of processing, the N-terminus is cleaved by ribosomal processing cysteine protease Prp.

The chain is Large ribosomal subunit protein bL27 from Staphylococcus aureus (strain Mu3 / ATCC 700698).